Consider the following 231-residue polypeptide: NADH-ubiquinone oxidoreductase chain 4 (231 aa).

The next 6 membrane-spanning stretches (helical) occupy residues 1-21, 34-54, 63-85, 89-111, 128-148, and 169-189; these read PIAG…YGII, MFIP…LTCL, IAYS…TPWG, AMAL…NTTY, ILPM…AMPP, and TIIM…HMFL.

It belongs to the complex I subunit 4 family.

It localises to the mitochondrion membrane. The enzyme catalyses a ubiquinone + NADH + 5 H(+)(in) = a ubiquinol + NAD(+) + 4 H(+)(out). In terms of biological role, core subunit of the mitochondrial membrane respiratory chain NADH dehydrogenase (Complex I) that is believed to belong to the minimal assembly required for catalysis. Complex I functions in the transfer of electrons from NADH to the respiratory chain. The immediate electron acceptor for the enzyme is believed to be ubiquinone. The chain is NADH-ubiquinone oxidoreductase chain 4 (MT-ND4) from Lachesis muta muta (Bushmaster).